A 353-amino-acid polypeptide reads, in one-letter code: Photosystem II protein D1 (353 aa).

An N-acetylthreonine modification is found at Thr2. Thr2 carries the phosphothreonine modification. Transmembrane regions (helical) follow at residues 29 to 46 (YIGW…TATS), 118 to 133 (HFLL…EWEL), and 142 to 156 (WIAV…AATA). His118 lines the chlorophyll a pocket. Position 126 (Tyr126) interacts with pheophytin a. Residues Asp170 and Glu189 each coordinate [CaMn4O5] cluster. The chain crosses the membrane as a helical span at residues 197–218 (FHMLGVAGVFGGSLFSAMHGSL). His198 serves as a coordination point for chlorophyll a. A quinone contacts are provided by residues His215 and 264–265 (SF). Position 215 (His215) interacts with Fe cation. His272 contributes to the Fe cation binding site. The chain crosses the membrane as a helical span at residues 274 to 288 (FLAAWPVVGIWFTAL). 4 residues coordinate [CaMn4O5] cluster: His332, Glu333, Asp342, and Ala344. A propeptide spanning residues 345-353 (AIEAPSTNG) is cleaved from the precursor.

This sequence belongs to the reaction center PufL/M/PsbA/D family. PSII is composed of 1 copy each of membrane proteins PsbA, PsbB, PsbC, PsbD, PsbE, PsbF, PsbH, PsbI, PsbJ, PsbK, PsbL, PsbM, PsbT, PsbX, PsbY, PsbZ, Psb30/Ycf12, at least 3 peripheral proteins of the oxygen-evolving complex and a large number of cofactors. It forms dimeric complexes. The D1/D2 heterodimer binds P680, chlorophylls that are the primary electron donor of PSII, and subsequent electron acceptors. It shares a non-heme iron and each subunit binds pheophytin, quinone, additional chlorophylls, carotenoids and lipids. D1 provides most of the ligands for the Mn4-Ca-O5 cluster of the oxygen-evolving complex (OEC). There is also a Cl(-1) ion associated with D1 and D2, which is required for oxygen evolution. The PSII complex binds additional chlorophylls, carotenoids and specific lipids. is required as a cofactor. Post-translationally, tyr-161 forms a radical intermediate that is referred to as redox-active TyrZ, YZ or Y-Z. In terms of processing, C-terminally processed by CTPA; processing is essential to allow assembly of the oxygen-evolving complex and thus photosynthetic growth.

It localises to the plastid. The protein resides in the chloroplast thylakoid membrane. The catalysed reaction is 2 a plastoquinone + 4 hnu + 2 H2O = 2 a plastoquinol + O2. Functionally, photosystem II (PSII) is a light-driven water:plastoquinone oxidoreductase that uses light energy to abstract electrons from H(2)O, generating O(2) and a proton gradient subsequently used for ATP formation. It consists of a core antenna complex that captures photons, and an electron transfer chain that converts photonic excitation into a charge separation. The D1/D2 (PsbA/PsbD) reaction center heterodimer binds P680, the primary electron donor of PSII as well as several subsequent electron acceptors. In Nicotiana debneyi (Debney's tobacco), this protein is Photosystem II protein D1.